A 340-amino-acid chain; its full sequence is MNPFHSSCWNTSAELSNKSWNKEFAYQTASAVDTVILPSMIGIICSTGLVGNILIVFTIIRSRKKTVPDIYICNLAVADLVHIIGMPFLIHQWARGGEWVFGGPLCTIITSLDTCNQFACSAIMTVMSVDRYFALVQPFRLTSWRTRYKTIRINLGLWAASFILALPVWIYSKVIKFKDGVESCAFDLTSPDDVLWYTLYLTITTFFFPLPLILVCYILILCYTWEMYQQNKDARCCNPSVPKQRVMKLTKMVLVLVAVFILSAAPYHVIQLVNLQMEQPTLAFYVGYYLSICLSYASSSINPFLYILLSGNFQKRLPQIQRRVTDKEIKNMGNTLKSHF.

The Extracellular portion of the chain corresponds to 1 to 34 (MNPFHSSCWNTSAELSNKSWNKEFAYQTASAVDT). Residues N10 and N17 are each glycosylated (N-linked (GlcNAc...) asparagine). The helical transmembrane segment at 35–57 (VILPSMIGIICSTGLVGNILIVF) threads the bilayer. Residues 58–69 (TIIRSRKKTVPD) lie on the Cytoplasmic side of the membrane. A helical transmembrane segment spans residues 70-92 (IYICNLAVADLVHIIGMPFLIHQ). Topologically, residues 93 to 106 (WARGGEWVFGGPLC) are extracellular. A helical membrane pass occupies residues 107–129 (TIITSLDTCNQFACSAIMTVMSV). At 130–149 (DRYFALVQPFRLTSWRTRYK) the chain is on the cytoplasmic side. The helical transmembrane segment at 150–172 (TIRINLGLWAASFILALPVWIYS) threads the bilayer. The Extracellular portion of the chain corresponds to 173 to 198 (KVIKFKDGVESCAFDLTSPDDVLWYT). A helical membrane pass occupies residues 199 to 221 (LYLTITTFFFPLPLILVCYILIL). Over 222–252 (CYTWEMYQQNKDARCCNPSVPKQRVMKLTKM) the chain is Cytoplasmic. A helical membrane pass occupies residues 253–272 (VLVLVAVFILSAAPYHVIQL). The Extracellular portion of the chain corresponds to 273–286 (VNLQMEQPTLAFYV). The chain crosses the membrane as a helical span at residues 287–309 (GYYLSICLSYASSSINPFLYILL). The Cytoplasmic segment spans residues 310–340 (SGNFQKRLPQIQRRVTDKEIKNMGNTLKSHF).

This sequence belongs to the G-protein coupled receptor 1 family.

It localises to the cell membrane. Its function is as follows. Receptor for melanin-concentrating hormone, coupled to G proteins that activate phosphoinositide hydrolysis. The sequence is that of Melanin-concentrating hormone receptor 2 (MCHR2) from Macaca fascicularis (Crab-eating macaque).